Reading from the N-terminus, the 207-residue chain is MIOREX complex component 11 (207 aa).

The transit peptide at 1-46 directs the protein to the mitochondrion; sequence MTVMNLFFRPCQLQMGSGPLELMLKRPTQLTTFMNTRPGGSTQIRF. At 47 to 98 the chain is on the mitochondrial matrix side; it reads ISGNLDPVKRREDRLRKIFSKSRLLTRLNKNPKFSHYFDRLSEAGTVPTLTS. Residues 99 to 119 traverse the membrane as a helical segment; the sequence is FFILHEVTAILPLFLLWWLLY. The Mitochondrial intermembrane portion of the chain corresponds to 120–177; it reads NLDLSDDFKLPNFLNGLMDSCHTAMEKFVGKRYQECLNKNKLILSGTVAYVTVKLLYP. A helical membrane pass occupies residues 178–198; that stretch reads VRIFISIWGAPYFGKWLLLPF. The Mitochondrial matrix portion of the chain corresponds to 199-207; sequence QKLKHLIKK.

It belongs to the MRX11 family. As to quaternary structure, associates with the mitochondrial ribosome.

It is found in the mitochondrion. The protein localises to the mitochondrion inner membrane. In terms of biological role, component of MIOREX complexes, large expressome-like assemblies of ribosomes with factors involved in all the steps of post-transcriptional gene expression. The chain is MIOREX complex component 11 from Saccharomyces cerevisiae (strain ATCC 204508 / S288c) (Baker's yeast).